The sequence spans 374 residues: Protein RecA (374 aa).

Residue 66-73 coordinates ATP; it reads GPESSGKT. Positions 326–374 are disordered; the sequence is KLGVGVHPEESATEPGADAASAAPADAAPAVPAPTTAKATKSKATAAKS. Low complexity predominate over residues 338-374; sequence TEPGADAASAAPADAAPAVPAPTTAKATKSKATAAKS.

It belongs to the RecA family.

It is found in the cytoplasm. Can catalyze the hydrolysis of ATP in the presence of single-stranded DNA, the ATP-dependent uptake of single-stranded DNA by duplex DNA, and the ATP-dependent hybridization of homologous single-stranded DNAs. It interacts with LexA causing its activation and leading to its autocatalytic cleavage. In Streptomyces coelicolor (strain ATCC BAA-471 / A3(2) / M145), this protein is Protein RecA.